Reading from the N-terminus, the 774-residue chain is 5-methyltetrahydropteroyltriglutamate--homocysteine methyltransferase (774 aa).

Residues 24-27 (RELK) and Lys-120 each bind 5-methyltetrahydropteroyltri-L-glutamate. L-homocysteine is bound by residues 446–448 (IGS) and Glu-499. L-methionine-binding positions include 446 to 448 (IGS) and Glu-499. Trp-576 contacts 5-methyltetrahydropteroyltri-L-glutamate. Asp-614 contacts L-homocysteine. Asp-614 is a binding site for L-methionine. Glu-620 contacts 5-methyltetrahydropteroyltri-L-glutamate. 3 residues coordinate Zn(2+): His-656, Cys-658, and Glu-680. His-709 acts as the Proton donor in catalysis. Zn(2+) is bound at residue Cys-741.

The protein belongs to the vitamin-B12 independent methionine synthase family. Zn(2+) is required as a cofactor.

It carries out the reaction 5-methyltetrahydropteroyltri-L-glutamate + L-homocysteine = tetrahydropteroyltri-L-glutamate + L-methionine. The protein operates within amino-acid biosynthesis; L-methionine biosynthesis via de novo pathway; L-methionine from L-homocysteine (MetE route): step 1/1. Functionally, catalyzes the transfer of a methyl group from 5-methyltetrahydrofolate to homocysteine resulting in methionine formation. This chain is 5-methyltetrahydropteroyltriglutamate--homocysteine methyltransferase, found in Streptomyces griseus subsp. griseus (strain JCM 4626 / CBS 651.72 / NBRC 13350 / KCC S-0626 / ISP 5235).